Reading from the N-terminus, the 180-residue chain is Nucleoside triphosphate/diphosphate phosphatase (180 aa).

The active-site Proton donor is the R26. Mg(2+) is bound by residues N90, D106, D108, D110, D123, and E126.

Belongs to the Ntdp family. Requires Mg(2+) as cofactor.

It carries out the reaction a ribonucleoside 5'-triphosphate + H2O = a ribonucleoside 5'-diphosphate + phosphate + H(+). It catalyses the reaction a ribonucleoside 5'-diphosphate + H2O = a ribonucleoside 5'-phosphate + phosphate + H(+). Has nucleoside phosphatase activity towards nucleoside triphosphates and nucleoside diphosphates. This is Nucleoside triphosphate/diphosphate phosphatase from Staphylococcus aureus (strain MRSA252).